The primary structure comprises 220 residues: NADH-quinone oxidoreductase subunit I (220 aa).

4Fe-4S ferredoxin-type domains are found at residues 71 to 102 (LQRL…IITH) and 112 to 141 (DSYT…MGNR). [4Fe-4S] cluster contacts are provided by Cys-82, Cys-85, Cys-88, Cys-92, Cys-121, Cys-124, Cys-127, and Cys-131. Positions 187–220 (MQATPLDYVQEPSKEESQEETPTNPESNKGDENV) are disordered.

Belongs to the complex I 23 kDa subunit family. In terms of assembly, NDH-1 is composed of 14 different subunits. Subunits NuoA, H, J, K, L, M, N constitute the membrane sector of the complex. [4Fe-4S] cluster serves as cofactor.

The protein localises to the cell inner membrane. The catalysed reaction is a quinone + NADH + 5 H(+)(in) = a quinol + NAD(+) + 4 H(+)(out). NDH-1 shuttles electrons from NADH, via FMN and iron-sulfur (Fe-S) centers, to quinones in the respiratory chain. The immediate electron acceptor for the enzyme in this species is believed to be ubiquinone. Couples the redox reaction to proton translocation (for every two electrons transferred, four hydrogen ions are translocated across the cytoplasmic membrane), and thus conserves the redox energy in a proton gradient. This is NADH-quinone oxidoreductase subunit I from Helicobacter pylori (strain ATCC 700392 / 26695) (Campylobacter pylori).